A 73-amino-acid chain; its full sequence is UPF0499 protein CHGG_06021 (73 aa).

Residues 1–20 (MKSSIHVVLFFLLSLVASMA) form the signal peptide. 3 disulfides stabilise this stretch: C41–C55, C48–C60, and C54–C69.

The protein belongs to the UPF0499 family.

The protein resides in the secreted. The chain is UPF0499 protein CHGG_06021 from Chaetomium globosum (strain ATCC 6205 / CBS 148.51 / DSM 1962 / NBRC 6347 / NRRL 1970) (Soil fungus).